A 569-amino-acid polypeptide reads, in one-letter code: Lysine--tRNA ligase (569 aa).

Positions 414 and 421 each coordinate Mg(2+).

This sequence belongs to the class-II aminoacyl-tRNA synthetase family. As to quaternary structure, homodimer. The cofactor is Mg(2+).

The protein localises to the cytoplasm. The enzyme catalyses tRNA(Lys) + L-lysine + ATP = L-lysyl-tRNA(Lys) + AMP + diphosphate. In Christiangramia forsetii (strain DSM 17595 / CGMCC 1.15422 / KT0803) (Gramella forsetii), this protein is Lysine--tRNA ligase.